Reading from the N-terminus, the 246-residue chain is Ribonuclease PH (246 aa).

Phosphate-binding positions include arginine 91 and 129–131; that span reads GTR.

The protein belongs to the RNase PH family. In terms of assembly, homohexameric ring arranged as a trimer of dimers.

The enzyme catalyses tRNA(n+1) + phosphate = tRNA(n) + a ribonucleoside 5'-diphosphate. Phosphorolytic 3'-5' exoribonuclease that plays an important role in tRNA 3'-end maturation. Removes nucleotide residues following the 3'-CCA terminus of tRNAs; can also add nucleotides to the ends of RNA molecules by using nucleoside diphosphates as substrates, but this may not be physiologically important. Probably plays a role in initiation of 16S rRNA degradation (leading to ribosome degradation) during starvation. This chain is Ribonuclease PH, found in Burkholderia orbicola (strain MC0-3).